The primary structure comprises 408 residues: Succinylornithine transaminase (408 aa).

Lys-252 bears the N6-(pyridoxal phosphate)lysine mark.

This sequence belongs to the class-III pyridoxal-phosphate-dependent aminotransferase family. AstC subfamily. The cofactor is pyridoxal 5'-phosphate.

The catalysed reaction is N(2)-succinyl-L-ornithine + 2-oxoglutarate = N-succinyl-L-glutamate 5-semialdehyde + L-glutamate. Its pathway is amino-acid degradation; L-arginine degradation via AST pathway; L-glutamate and succinate from L-arginine: step 3/5. Functionally, catalyzes the transamination of N(2)-succinylornithine and alpha-ketoglutarate into N(2)-succinylglutamate semialdehyde and glutamate. Can also act as an acetylornithine aminotransferase. The protein is Succinylornithine transaminase of Salmonella agona (strain SL483).